The primary structure comprises 435 residues: Serine carboxypeptidase-like 16 (435 aa).

The signal sequence occupies residues M1–S23. 3 disulfide bridges follow: C82/C325, C246/C260, and C284/C291. N103 carries an N-linked (GlcNAc...) asparagine glycan. S178 is a catalytic residue. N305 carries N-linked (GlcNAc...) asparagine glycosylation. D360 is a catalytic residue. N376 carries N-linked (GlcNAc...) asparagine glycosylation. H413 is an active-site residue.

It belongs to the peptidase S10 family. In terms of tissue distribution, expressed in seedlings, roots and leaves.

Its subcellular location is the secreted. Functionally, probable carboxypeptidase. This is Serine carboxypeptidase-like 16 (SCPL16) from Arabidopsis thaliana (Mouse-ear cress).